The following is a 409-amino-acid chain: Snake venom metalloproteinase BITM02A (409 aa).

The N-terminal stretch at 1–20 (MIEVLLVTICLAAFPYQGSS) is a signal peptide. A propeptide spanning residues 21 to 189 (IILESGNVND…KKASQSNLTP (169 aa)) is cleaved from the precursor. The region spanning 193–389 (RYIELFIVVD…ENPQCILNKR (197 aa)) is the Peptidase M12B domain. Glu196 and Asp280 together coordinate Ca(2+). Disulfide bonds link Cys304/Cys384, Cys344/Cys368, and Cys346/Cys351. His329 lines the Zn(2+) pocket. The active site involves Glu330. His333 and His339 together coordinate Zn(2+). Residues Cys384, Asn387, Val399, Asn402, Leu404, Glu406, and Glu409 each coordinate Ca(2+). The propeptide occupies 390-409 (LRTDTVSTPVSGNELLEAGE).

It belongs to the venom metalloproteinase (M12B) family. P-I subfamily. Monomer. Zn(2+) serves as cofactor. As to expression, expressed by the venom gland.

Its subcellular location is the secreted. In terms of biological role, snake venom metalloproteinase that impairs hemostasis in the envenomed animal. In Bothrops insularis (Golden lancehead), this protein is Snake venom metalloproteinase BITM02A.